A 565-amino-acid polypeptide reads, in one-letter code: NAD-dependent malic enzyme (565 aa).

Tyr-104 serves as the catalytic Proton donor. An NAD(+)-binding site is contributed by Arg-157. The active-site Proton acceptor is Lys-175. Residues Glu-246, Asp-247, and Asp-270 each coordinate a divalent metal cation. Asp-270 and Asn-418 together coordinate NAD(+).

Belongs to the malic enzymes family. In terms of assembly, homotetramer. Mg(2+) is required as a cofactor. It depends on Mn(2+) as a cofactor.

The enzyme catalyses (S)-malate + NAD(+) = pyruvate + CO2 + NADH. It catalyses the reaction oxaloacetate + H(+) = pyruvate + CO2. The polypeptide is NAD-dependent malic enzyme (Salmonella choleraesuis (strain SC-B67)).